The sequence spans 213 residues: Leucine-rich repeat protein 1 (213 aa).

An N-terminal signal peptide occupies residues 1 to 21; that stretch reads MGAGALGVVAMVAAAVVVAMA. LRR repeat units lie at residues 90-113, 115-137, 138-161, and 163-186; these read DHLQ…LGNL, NLIS…LGKL, TSLV…LAGI, and SLKV…PFEH.

Interacts with HIR1.

Its subcellular location is the early endosome membrane. The protein resides in the late endosome membrane. It localises to the cell membrane. Its function is as follows. Involved in plant defense response. In Oryza sativa subsp. indica (Rice), this protein is Leucine-rich repeat protein 1.